A 452-amino-acid chain; its full sequence is Transcription factor SMP1 (452 aa).

In terms of domain architecture, MADS-box spans 3–57 (RRKIEIEPIKDDRNRTVTFIKRKAGLFKKAHELSVLCQVDIAVIILGSNNTFYEY). Residues 58 to 87 (SSVDMSNLLNVHQNNTDLPHNIIEPSDYGD) constitute a DNA-binding region (mef2-type). Residues 97 to 142 (NERKRRRRRATVLQPASHSGSCTVSSQDSSSVQNNGNLSAPLASND) are disordered. Residues 115-127 (SGSCTVSSQDSSS) are compositionally biased toward low complexity.

Belongs to the MEF2 family. In terms of assembly, can heterodimerize with RLM1. Interacts with HOG1. In terms of processing, phosphorylated by HOG1.

It localises to the nucleus. Transcription factor that controls part of the HOG1-mediated osmostress responses. Binds to the DNA sequence 5'-ACTACTA[TA](4)TAG-3'. Does not appear to function in the MPK1 pathway. The sequence is that of Transcription factor SMP1 (SMP1) from Saccharomyces cerevisiae (strain ATCC 204508 / S288c) (Baker's yeast).